The primary structure comprises 455 residues: Bifunctional protein GlmU (455 aa).

The tract at residues 1-228 (MTQPLHVIIL…AQEAEGANDP (228 aa)) is pyrophosphorylase. UDP-N-acetyl-alpha-D-glucosamine-binding positions include 10–13 (LAAG), Lys24, Gln76, 81–82 (GT), 103–105 (YGD), Gly138, Glu153, Asn168, and Asn226. Asp105 contacts Mg(2+). A Mg(2+)-binding site is contributed by Asn226. Residues 229–249 (WQLSQLERAWQRRAVRALCAQ) are linker. Residues 250–455 (GARVRDPARL…DGWKRPLKKS (206 aa)) are N-acetyltransferase. Arg332 and Lys350 together coordinate UDP-N-acetyl-alpha-D-glucosamine. The active-site Proton acceptor is the His362. UDP-N-acetyl-alpha-D-glucosamine-binding residues include Tyr365 and Asn376. Acetyl-CoA-binding positions include Ala379, 385 to 386 (NY), Ser404, Ala422, and Arg439.

This sequence in the N-terminal section; belongs to the N-acetylglucosamine-1-phosphate uridyltransferase family. It in the C-terminal section; belongs to the transferase hexapeptide repeat family. In terms of assembly, homotrimer. Mg(2+) serves as cofactor.

Its subcellular location is the cytoplasm. It catalyses the reaction alpha-D-glucosamine 1-phosphate + acetyl-CoA = N-acetyl-alpha-D-glucosamine 1-phosphate + CoA + H(+). The enzyme catalyses N-acetyl-alpha-D-glucosamine 1-phosphate + UTP + H(+) = UDP-N-acetyl-alpha-D-glucosamine + diphosphate. It participates in nucleotide-sugar biosynthesis; UDP-N-acetyl-alpha-D-glucosamine biosynthesis; N-acetyl-alpha-D-glucosamine 1-phosphate from alpha-D-glucosamine 6-phosphate (route II): step 2/2. It functions in the pathway nucleotide-sugar biosynthesis; UDP-N-acetyl-alpha-D-glucosamine biosynthesis; UDP-N-acetyl-alpha-D-glucosamine from N-acetyl-alpha-D-glucosamine 1-phosphate: step 1/1. The protein operates within bacterial outer membrane biogenesis; LPS lipid A biosynthesis. Functionally, catalyzes the last two sequential reactions in the de novo biosynthetic pathway for UDP-N-acetylglucosamine (UDP-GlcNAc). The C-terminal domain catalyzes the transfer of acetyl group from acetyl coenzyme A to glucosamine-1-phosphate (GlcN-1-P) to produce N-acetylglucosamine-1-phosphate (GlcNAc-1-P), which is converted into UDP-GlcNAc by the transfer of uridine 5-monophosphate (from uridine 5-triphosphate), a reaction catalyzed by the N-terminal domain. The sequence is that of Bifunctional protein GlmU from Stenotrophomonas maltophilia (strain R551-3).